We begin with the raw amino-acid sequence, 832 residues long: Protein P (832 aa).

The interval 1 to 177 (MPLSYQHFRK…FCGSPYSWEQ (177 aa)) is terminal protein domain (TP). A spacer region spans residues 178-335 (ELQHGAESFH…YCLSHLVSLL (158 aa)). The interval 336–679 (DDWGPCTEHG…YSTLYPVARQ (344 aa)) is polymerase/reverse transcriptase domain (RT). The Reverse transcriptase domain maps to 346–589 (EHHIRIPRTP…YSLHFMGYVI (244 aa)). Residues Asp-418, Asp-540, and Asp-541 each coordinate Mg(2+).

It belongs to the hepadnaviridae P protein family.

The catalysed reaction is DNA(n) + a 2'-deoxyribonucleoside 5'-triphosphate = DNA(n+1) + diphosphate. The enzyme catalyses Endonucleolytic cleavage to 5'-phosphomonoester.. Its activity is regulated as follows. Activated by host HSP70 and HSP40 in vitro to be able to bind the epsilon loop of the pgRNA. Because deletion of the RNase H region renders the protein partly chaperone-independent, the chaperones may be needed indirectly to relieve occlusion of the RNA-binding site by this domain. Inhibited by several reverse-transcriptase inhibitors: Lamivudine, Adefovir and Entecavir. Functionally, multifunctional enzyme that converts the viral RNA genome into dsDNA in viral cytoplasmic capsids. This enzyme displays a DNA polymerase activity that can copy either DNA or RNA templates, and a ribonuclease H (RNase H) activity that cleaves the RNA strand of RNA-DNA heteroduplexes in a partially processive 3'- to 5'-endonucleasic mode. Neo-synthesized pregenomic RNA (pgRNA) are encapsidated together with the P protein, and reverse-transcribed inside the nucleocapsid. Initiation of reverse-transcription occurs first by binding the epsilon loop on the pgRNA genome, and is initiated by protein priming, thereby the 5'-end of (-)DNA is covalently linked to P protein. Partial (+)DNA is synthesized from the (-)DNA template and generates the relaxed circular DNA (RC-DNA) genome. After budding and infection, the RC-DNA migrates in the nucleus, and is converted into a plasmid-like covalently closed circular DNA (cccDNA). The activity of P protein does not seem to be necessary for cccDNA generation, and is presumably released from (+)DNA by host nuclear DNA repair machinery. The chain is Protein P from Pan troglodytes (Chimpanzee).